The following is a 137-amino-acid chain: Small ribosomal subunit protein uS9 (137 aa).

Basic and acidic residues predominate over residues 105–117 (LKVEGYLTRDPRA). The segment at 105–137 (LKVEGYLTRDPRAKERKKYGLRKARKAPQYSKR) is disordered. Residues 118–137 (KERKKYGLRKARKAPQYSKR) show a composition bias toward basic residues.

It belongs to the universal ribosomal protein uS9 family.

The polypeptide is Small ribosomal subunit protein uS9 (Cyanothece sp. (strain PCC 7425 / ATCC 29141)).